Here is a 713-residue protein sequence, read N- to C-terminus: Signal transducer and activator of transcription 1 (713 aa).

The SH2 domain occupies 477-574 (WCIGFISKHD…EEMLRYFESE (98 aa)).

It belongs to the transcription factor STAT family. In terms of assembly, forms a homodimer or a heterodimer with a related family member.

The protein localises to the cytoplasm. The protein resides in the nucleus. Its function is as follows. Carries out a dual function: signal transduction and activation of transcription. Activated STAT proteins play a role in repression of dauer formation. Neuronal expression is held in check by negative signals through the TGF-beta pathway that target the daf-3 transcription factor. The polypeptide is Signal transducer and activator of transcription 1 (Caenorhabditis briggsae).